The chain runs to 840 residues: Phosphatidylglycerol lysyltransferase (840 aa).

The Cytoplasmic segment spans residues 1–8 (MNQEVKNK). The chain crosses the membrane as a helical span at residues 9–29 (IFSILKITFATALFIFVAITL). Topologically, residues 30–52 (YRELSGINFKDTLVEFSKINRMS) are extracellular. The chain crosses the membrane as a helical span at residues 53–73 (LVLLFIGGGASLVILSMYDVI). The Cytoplasmic segment spans residues 74–89 (LSRALKMDISLGKVLR). A helical transmembrane segment spans residues 90–110 (VSYIINALNAIVGFGGFIGAG). The Extracellular segment spans residues 111–128 (VRAMVYKNYTHDKKKLVH). A helical transmembrane segment spans residues 129 to 149 (FISLILISMLTGLSLLSLLIV). The Cytoplasmic segment spans residues 150 to 161 (FHVFDASLILDK). Residues 162–182 (ITWVRWVLYVVSFFLPLFIIY) traverse the membrane as a helical segment. At 183 to 200 (SMVRPPDKNNRFVGLYCT) the chain is on the extracellular side. Residues 201-221 (LVSCVEWLAAAVVLYFCGVIV) traverse the membrane as a helical segment. Residues 222-229 (DAHVSFMS) are Cytoplasmic-facing. A helical transmembrane segment spans residues 230–250 (FIAIFIIAALSGLVSFIPGGF). The Extracellular segment spans residues 251-271 (GAFDLVVLLGFKTLGVPEEKV). Residues 272–292 (LLMLLLYRFAYYFVPVIIALI) traverse the membrane as a helical segment. Residues 293-337 (LSSFEFGTSAKKYIEGSKYFIPAKDVTSFLMSYQKDIIAKIPSLS) lie on the Cytoplasmic side of the membrane. Residues 338 to 358 (LAILVFFTSMIFFVNNLTIVY) traverse the membrane as a helical segment. Over 359-369 (DALYDGNHLTY) the chain is Extracellular. Residues 370-390 (YILLAIHTSACLLLLLNVVGI) traverse the membrane as a helical segment. At 391 to 394 (YKQS) the chain is on the cytoplasmic side. Helical transmembrane passes span 395-415 (RRAI…TFFT) and 416-436 (YASY…IVAF). Over 437-450 (RRARRLKRPVRMRN) the chain is Cytoplasmic. Residues 451 to 471 (IVAMLLFSLFILYVNHIFIAG) traverse the membrane as a helical segment. Residues 472–489 (TLYALDIYTIEMHTSVLR) lie on the Extracellular side of the membrane. A helical membrane pass occupies residues 490–510 (YYFWLTILIIAIIIGMIAWLF). The Cytoplasmic portion of the chain corresponds to 511 to 840 (DYQFSKVRIS…SKVMRVIRHK (330 aa)).

Belongs to the LPG synthase family.

The protein localises to the cell membrane. The enzyme catalyses L-lysyl-tRNA(Lys) + a 1,2-diacyl-sn-glycero-3-phospho-(1'-sn-glycerol) = a 1,2-diacyl-sn-glycero-3-phospho-1'-(3'-O-L-lysyl)-sn-glycerol + tRNA(Lys). Functionally, catalyzes the transfer of a lysyl group from L-lysyl-tRNA(Lys) to membrane-bound phosphatidylglycerol (PG), which produces lysylphosphatidylglycerol (LPG), a major component of the bacterial membrane with a positive net charge. LPG synthesis contributes to bacterial virulence as it is involved in the resistance mechanism against cationic antimicrobial peptides (CAMP) produces by the host's immune system (defensins, cathelicidins) and by the competing microorganisms (bacteriocins). In fact, the modification of anionic phosphatidylglycerol with positively charged L-lysine results in repulsion of the peptides. The polypeptide is Phosphatidylglycerol lysyltransferase (mprF) (Staphylococcus aureus (strain Mu50 / ATCC 700699)).